Here is a 247-residue protein sequence, read N- to C-terminus: Transcription factor bHLH92 (247 aa).

The bHLH domain occupies 85–134 (ERSRRHMLKERTRREKQKQSYLALHSLLPFATKNDKNSIVEKAVDEIAKL).

Homodimer.

The protein localises to the nucleus. In Arabidopsis thaliana (Mouse-ear cress), this protein is Transcription factor bHLH92 (BHLH92).